A 452-amino-acid polypeptide reads, in one-letter code: MNKILIAAASSGTGKTTVTLGIMHALKKRGLRVQPFKVGPDYIDTNYHQAITGVASINLDSFLIDDDAMLAALFEKHGQSADISVIEGVMGLFDGLGIDRDNSSTSFIAKCTKTPVILVVDGKAISTSAAAIVDGFNRFDPELTIAGVIINRVASENHFSLIKGAIERYTDVPVLGYLPKNAAVALPERHLGLVPKEEMTELETKWEVLGDLIAEHVDLDRLLAISKTGAKLTVHPPEIQVPDFSGMRVAYALDAAFHFYYQDNLDFIRSTGATLIPFSPLEEREVPDADFIYIGGGFPEVFAERLAKNKSMHESILAAHEQGKPIYAECGGLMYLGSSLEMEAESYEMVGVFDGVSKMTTRLRKFGYCIAEPLEDTLLGKKGTAIRGHEFHHSVFETTEPTRMKLTKKRDGETVKEWHGGYQKGNTFASYLHIHFYQNLAMITHMFGAIER.

The GATase cobBQ-type domain occupies 248-441 (RVAYALDAAF…LHIHFYQNLA (194 aa)). Residue Cys-330 is the Nucleophile of the active site.

It belongs to the CobB/CbiA family. It depends on Mg(2+) as a cofactor.

It catalyses the reaction cob(II)yrinate + 2 L-glutamine + 2 ATP + 2 H2O = cob(II)yrinate a,c diamide + 2 L-glutamate + 2 ADP + 2 phosphate + 2 H(+). Its pathway is cofactor biosynthesis; adenosylcobalamin biosynthesis; cob(II)yrinate a,c-diamide from sirohydrochlorin (anaerobic route): step 10/10. Its function is as follows. Catalyzes the ATP-dependent amidation of the two carboxylate groups at positions a and c of cobyrinate, using either L-glutamine or ammonia as the nitrogen source. The polypeptide is Cobyrinate a,c-diamide synthase (Listeria monocytogenes serovar 1/2a (strain ATCC BAA-679 / EGD-e)).